Consider the following 580-residue polypeptide: Frizzled and smoothened-like protein K (580 aa).

An N-terminal signal peptide occupies residues 1-18 (MRVLFILFLFYFYTYTEA). The Extracellular portion of the chain corresponds to 19 to 236 (QQYYPIDPTG…QWDNIFDTSD (218 aa)). The FZ domain maps to 25–154 (DPTGKCEQYI…SSDYNLTTYG (130 aa)). N-linked (GlcNAc...) asparagine glycosylation is found at Asn-52, Asn-97, Asn-149, Asn-170, and Asn-186. A helical membrane pass occupies residues 237-257 (AISLVSLLCSVYLFITYMVIN). The Cytoplasmic portion of the chain corresponds to 258–264 (PKRNKYD). Residues 265 to 285 (YFFSFFVLSIILMSIAGTIGF) form a helical membrane-spanning segment. Residues 286–308 (SVGGTRKLLCPEINRRGVYTDPA) are Extracellular-facing. The helical transmembrane segment at 309–329 (VAAAGWIFQFAIINAILWFSI) threads the bilayer. The Cytoplasmic segment spans residues 330–349 (NSFELWFQIKFIKRKLHLIK). A helical membrane pass occupies residues 350–370 (FYILAVLVISIALSVPLSAIG). The Extracellular segment spans residues 371–391 (EFNAGLGNFVVWIESGKYQNW). The helical transmembrane segment at 392 to 412 (FFWGPLGIVLTVGTTFIGLVI) threads the bilayer. Residues 413-434 (WEIYKIVSSTNKSDFFKLQLKP) lie on the Cytoplasmic side of the membrane. The helical transmembrane segment at 435–455 (LMNMLLIYLTFVYLFGYNFYI) threads the bilayer. The Extracellular portion of the chain corresponds to 456–490 (HNSLNGFYGSSEEFKNCIISTDGKDCRIQGPPYSS). Residues 491–511 (ILMFVFCLRIYGVYCIALYGF) traverse the membrane as a helical segment. The Cytoplasmic segment spans residues 512–580 (SPKTRSIWSN…SMEPDEIILR (69 aa)). The short motif at 514-519 (KTRSIW) is the Lys-Thr-X-X-X-Trp motif, mediates interaction with the PDZ domain of Dvl family members element. Residues 542-580 (TTKGGTSSTDIKMSTNNNSNMDSGGGKSSSMEPDEIILR) are disordered. A compositionally biased stretch (polar residues) spans 551–563 (DIKMSTNNNSNMD).

The protein belongs to the G-protein coupled receptor Fz/Smo family.

The protein localises to the membrane. The polypeptide is Frizzled and smoothened-like protein K (fslK) (Dictyostelium discoideum (Social amoeba)).